We begin with the raw amino-acid sequence, 90 residues long: Putative beta-neurotoxin RjAa2f (90 aa).

The first 18 residues, 1–18 (MKILIFIIASFMLIGVEC), serve as a signal peptide directing secretion. One can recognise an LCN-type CS-alpha/beta domain in the interval 19-89 (KEGYPMGSDG…VWDSKTNKCG (71 aa)). 4 disulfides stabilise this stretch: C29-C88, C33-C62, C40-C69, and C44-C71.

The protein belongs to the long (4 C-C) scorpion toxin superfamily. Sodium channel inhibitor family. Beta subfamily. In terms of tissue distribution, expressed by the venom gland.

It is found in the secreted. In terms of biological role, beta toxins bind voltage-independently at site-4 of sodium channels (Nav) and shift the voltage of activation toward more negative potentials thereby affecting sodium channel activation and promoting spontaneous and repetitive firing. The protein is Putative beta-neurotoxin RjAa2f of Rhopalurus junceus (Caribbean blue scorpion).